A 160-amino-acid chain; its full sequence is Cyanate hydratase (160 aa).

Residues Arg-100, Glu-103, and Ser-126 contribute to the active site.

It belongs to the cyanase family.

The catalysed reaction is cyanate + hydrogencarbonate + 3 H(+) = NH4(+) + 2 CO2. Functionally, catalyzes the reaction of cyanate with bicarbonate to produce ammonia and carbon dioxide. The chain is Cyanate hydratase from Aspergillus flavus (strain ATCC 200026 / FGSC A1120 / IAM 13836 / NRRL 3357 / JCM 12722 / SRRC 167).